The following is a 133-amino-acid chain: ATP synthase epsilon chain (133 aa).

Belongs to the ATPase epsilon chain family. As to quaternary structure, F-type ATPases have 2 components, CF(1) - the catalytic core - and CF(0) - the membrane proton channel. CF(1) has five subunits: alpha(3), beta(3), gamma(1), delta(1), epsilon(1). CF(0) has three main subunits: a, b and c.

Its subcellular location is the cell membrane. Functionally, produces ATP from ADP in the presence of a proton gradient across the membrane. The sequence is that of ATP synthase epsilon chain (atpC) from Clostridium acetobutylicum (strain ATCC 824 / DSM 792 / JCM 1419 / IAM 19013 / LMG 5710 / NBRC 13948 / NRRL B-527 / VKM B-1787 / 2291 / W).